The chain runs to 214 residues: Redox-sensing transcriptional repressor Rex (214 aa).

Positions 16–55 (IYFRYLNVLKDANKQRVSSTELSEAVQVDSATIRRDFSYF) form a DNA-binding region, H-T-H motif. 90–95 (GVGSLG) provides a ligand contact to NAD(+).

Belongs to the transcriptional regulatory Rex family. Homodimer.

The protein localises to the cytoplasm. Modulates transcription in response to changes in cellular NADH/NAD(+) redox state. In Limosilactobacillus reuteri (strain DSM 20016) (Lactobacillus reuteri), this protein is Redox-sensing transcriptional repressor Rex.